Here is an 85-residue protein sequence, read N- to C-terminus: HPr-like protein Crh (85 aa).

The region spanning 1-85 (MVQQKVEVRL…KLAAYVQEEV (85 aa)) is the HPr domain. Residue S46 is modified to Phosphoserine; by HPrK/P.

It belongs to the HPr family. In terms of assembly, mixture of monomers and homodimers. Interacts with CcpA as a monomer.

Functionally, along with seryl-phosphorylated HPr, phosphorylated Crh is implicated in carbon catabolite repression (CCR) of levanase, inositol dehydrogenase, and beta-xylosidase. Exerts its effect on CCR by interacting with CcpA. This is HPr-like protein Crh (crh) from Bacillus subtilis (strain 168).